Here is a 146-residue protein sequence, read N- to C-terminus: Large ribosomal subunit protein uL15 (146 aa).

A disordered region spans residues 1–46 (MAIELHDLKPAPGAHKAKTRVGRGEGSKGKTAGRGTKGTGARKNVP). Positions 29–43 (GKTAGRGTKGTGARK) are enriched in low complexity.

The protein belongs to the universal ribosomal protein uL15 family. As to quaternary structure, part of the 50S ribosomal subunit.

Binds to the 23S rRNA. This Cutibacterium acnes (strain DSM 16379 / KPA171202) (Propionibacterium acnes) protein is Large ribosomal subunit protein uL15.